A 251-amino-acid polypeptide reads, in one-letter code: Tryptophan synthase alpha chain (251 aa).

Catalysis depends on proton acceptor residues glutamate 36 and aspartate 47.

This sequence belongs to the TrpA family. Tetramer of two alpha and two beta chains.

It catalyses the reaction (1S,2R)-1-C-(indol-3-yl)glycerol 3-phosphate + L-serine = D-glyceraldehyde 3-phosphate + L-tryptophan + H2O. It functions in the pathway amino-acid biosynthesis; L-tryptophan biosynthesis; L-tryptophan from chorismate: step 5/5. Functionally, the alpha subunit is responsible for the aldol cleavage of indoleglycerol phosphate to indole and glyceraldehyde 3-phosphate. This chain is Tryptophan synthase alpha chain, found in Thermococcus kodakarensis (strain ATCC BAA-918 / JCM 12380 / KOD1) (Pyrococcus kodakaraensis (strain KOD1)).